The sequence spans 2145 residues: Glutamate synthase [NADH] (2145 aa).

Residues 1–53 constitute a propeptide that is removed on maturation; it reads MPVLKSDNFDPLEEAYEGGTIQNYNDEHHLHKSWANVIPDKRGLYDPDYEHDA. C54 serves as the catalytic For GATase activity. In terms of domain architecture, Glutamine amidotransferase type-2 spans 54 to 455; it reads CGVGFVANKH…PGDLFLVDTQ (402 aa). 1132–1189 is a binding site for FMN; sequence LAETHQTLVLNDLRRNVVVQTDGQLRTGFDIAVAVLLGAESFTLATVPLIAMGCVMLR. C1185, C1191, and C1196 together coordinate [3Fe-4S] cluster. Residues 1551–1600 adopt a coiled-coil conformation; that stretch reads KKVLLKEKAEAAKAKAKATSEYLKKFRSNQEVDDEVNTLLIANQKAKEQE. 1928–1942 contacts NAD(+); sequence GGGDTGNDCLGTSVR. The residue at position 2070 (T2070) is a Phosphothreonine.

The protein belongs to the glutamate synthase family. In terms of assembly, homotrimer. The cofactor is [3Fe-4S] cluster. FAD serves as cofactor. Requires FMN as cofactor.

The catalysed reaction is 2 L-glutamate + NAD(+) = L-glutamine + 2-oxoglutarate + NADH + H(+). It functions in the pathway amino-acid biosynthesis; L-glutamate biosynthesis via GLT pathway; L-glutamate from 2-oxoglutarate and L-glutamine (NAD(+) route): step 1/1. Its pathway is energy metabolism; nitrogen metabolism. Inhibited by homocysteine sulfonamide. Functionally, forms L-glutamate from L-glutamine and 2-oxoglutarate. Represents an alternative pathway to L-glutamate dehydrogenase for the biosynthesis of L-glutamate. Participates with glutamine synthetase in ammonia assimilation processes. The enzyme is specific for NADH, L-glutamine and 2-oxoglutarate. This is Glutamate synthase [NADH] (GLT1) from Saccharomyces cerevisiae (strain ATCC 204508 / S288c) (Baker's yeast).